The following is a 314-amino-acid chain: Deoxymugineic acid synthase 1-D (314 aa).

The disordered stretch occupies residues 1 to 21; that stretch reads MGAGEKTAAGMPRIGMGTAVQ. Aspartate 44 is a binding site for NADP(+). Tyrosine 49 functions as the Proton donor in the catalytic mechanism. Histidine 112 provides a ligand contact to substrate. Residues 158–159, glutamine 180, 258–266, and 273–281 each bind NADP(+); these read AN, FDEARMREN, and ELTEEERLR.

Belongs to the aldo/keto reductase family. In terms of tissue distribution, mostly expressed in root tissues, observed, at low levels, in mesocotyl and embryonic roots, seedling roots, crown and seedling leafes, mature bracts, anthers, pistil, caryopsis and embryos.

It carries out the reaction 2'-deoxymugineate + NAD(+) = 3''-deamino-3''-oxonicotianamine + NADH + H(+). The enzyme catalyses 2'-deoxymugineate + NADP(+) = 3''-deamino-3''-oxonicotianamine + NADPH + H(+). The protein operates within siderophore biosynthesis. Its function is as follows. Catalyzes the reduction of a 3''-keto intermediate during the biosynthesis of 2'-deoxymugineic acid (DMA) from L-Met. Involved in the formation of phytosiderophores (MAs) belonging to the mugineic acid family and required to acquire iron. This is Deoxymugineic acid synthase 1-D from Triticum aestivum (Wheat).